Consider the following 371-residue polypeptide: 4-hydroxy-3-methylbut-2-en-1-yl diphosphate synthase (flavodoxin) (371 aa).

[4Fe-4S] cluster is bound by residues Cys-270, Cys-273, Cys-305, and Glu-312.

The protein belongs to the IspG family. [4Fe-4S] cluster serves as cofactor.

The enzyme catalyses (2E)-4-hydroxy-3-methylbut-2-enyl diphosphate + oxidized [flavodoxin] + H2O + 2 H(+) = 2-C-methyl-D-erythritol 2,4-cyclic diphosphate + reduced [flavodoxin]. Its pathway is isoprenoid biosynthesis; isopentenyl diphosphate biosynthesis via DXP pathway; isopentenyl diphosphate from 1-deoxy-D-xylulose 5-phosphate: step 5/6. Its function is as follows. Converts 2C-methyl-D-erythritol 2,4-cyclodiphosphate (ME-2,4cPP) into 1-hydroxy-2-methyl-2-(E)-butenyl 4-diphosphate. The sequence is that of 4-hydroxy-3-methylbut-2-en-1-yl diphosphate synthase (flavodoxin) from Chromohalobacter salexigens (strain ATCC BAA-138 / DSM 3043 / CIP 106854 / NCIMB 13768 / 1H11).